Reading from the N-terminus, the 368-residue chain is Phosphoribosylaminoimidazole-succinocarboxamide synthase (368 aa).

Belongs to the SAICAR synthetase family.

The catalysed reaction is 5-amino-1-(5-phospho-D-ribosyl)imidazole-4-carboxylate + L-aspartate + ATP = (2S)-2-[5-amino-1-(5-phospho-beta-D-ribosyl)imidazole-4-carboxamido]succinate + ADP + phosphate + 2 H(+). The protein operates within purine metabolism; IMP biosynthesis via de novo pathway; 5-amino-1-(5-phospho-D-ribosyl)imidazole-4-carboxamide from 5-amino-1-(5-phospho-D-ribosyl)imidazole-4-carboxylate: step 1/2. This chain is Phosphoribosylaminoimidazole-succinocarboxamide synthase, found in Vibrio cholerae serotype O1 (strain ATCC 39315 / El Tor Inaba N16961).